Consider the following 420-residue polypeptide: UDP-N-acetylglucosamine 1-carboxyvinyltransferase (420 aa).

22-23 (KN) is a binding site for phosphoenolpyruvate. Arginine 93 contributes to the UDP-N-acetyl-alpha-D-glucosamine binding site. Cysteine 117 functions as the Proton donor in the catalytic mechanism. Cysteine 117 carries the 2-(S-cysteinyl)pyruvic acid O-phosphothioketal modification. The UDP-N-acetyl-alpha-D-glucosamine site is built by aspartate 306 and isoleucine 328.

Belongs to the EPSP synthase family. MurA subfamily.

It localises to the cytoplasm. It catalyses the reaction phosphoenolpyruvate + UDP-N-acetyl-alpha-D-glucosamine = UDP-N-acetyl-3-O-(1-carboxyvinyl)-alpha-D-glucosamine + phosphate. The protein operates within cell wall biogenesis; peptidoglycan biosynthesis. Cell wall formation. Adds enolpyruvyl to UDP-N-acetylglucosamine. The chain is UDP-N-acetylglucosamine 1-carboxyvinyltransferase from Colwellia psychrerythraea (strain 34H / ATCC BAA-681) (Vibrio psychroerythus).